A 456-amino-acid chain; its full sequence is Flagellum-specific ATP synthase (456 aa).

182-189 is an ATP binding site; it reads AGSGVGKS.

The protein belongs to the ATPase alpha/beta chains family.

The protein resides in the cytoplasm. It carries out the reaction ATP + H2O + 4 H(+)(in) = ADP + phosphate + 5 H(+)(out). Its function is as follows. Probable catalytic subunit of a protein translocase for flagellum-specific export, or a proton translocase involved in local circuits at the flagellum. May be involved in a specialized protein export pathway that proceeds without signal peptide cleavage. This Salmonella typhimurium (strain LT2 / SGSC1412 / ATCC 700720) protein is Flagellum-specific ATP synthase (fliI).